The primary structure comprises 269 residues: Shikimate dehydrogenase (NADP(+)) (269 aa).

Shikimate-binding positions include 17 to 19 and Thr64; that span reads SKS. The active-site Proton acceptor is Lys68. Glu80 serves as a coordination point for NADP(+). Residues Asn89 and Asp105 each coordinate shikimate. Residues 130 to 134, 154 to 159, and Met213 contribute to the NADP(+) site; these read GAGGA and NRTRAK. Tyr215 contacts shikimate. Gly237 serves as a coordination point for NADP(+).

The protein belongs to the shikimate dehydrogenase family. In terms of assembly, homodimer.

The enzyme catalyses shikimate + NADP(+) = 3-dehydroshikimate + NADPH + H(+). It functions in the pathway metabolic intermediate biosynthesis; chorismate biosynthesis; chorismate from D-erythrose 4-phosphate and phosphoenolpyruvate: step 4/7. Involved in the biosynthesis of the chorismate, which leads to the biosynthesis of aromatic amino acids. Catalyzes the reversible NADPH linked reduction of 3-dehydroshikimate (DHSA) to yield shikimate (SA). The polypeptide is Shikimate dehydrogenase (NADP(+)) (Neisseria lactamica).